Reading from the N-terminus, the 548-residue chain is Polynucleotide 5'-hydroxyl-kinase nol-9 (548 aa).

186-193 provides a ligand contact to ATP; it reads GHKGAGKS.

It belongs to the Clp1 family. NOL9/GRC3 subfamily.

The protein localises to the nucleus. It is found in the nucleolus. In terms of biological role, polynucleotide 5'-kinase involved in rRNA processing. This Caenorhabditis briggsae protein is Polynucleotide 5'-hydroxyl-kinase nol-9 (nol-9).